Consider the following 551-residue polypeptide: Urocanate hydratase (551 aa).

NAD(+) contacts are provided by residues 48 to 49, glutamine 126, 172 to 174, glutamate 192, arginine 197, 238 to 239, 259 to 263, 269 to 270, and tyrosine 318; these read GG, GMG, NA, QTSAH, and YI. Residue cysteine 406 is part of the active site. An NAD(+)-binding site is contributed by glycine 488.

The protein belongs to the urocanase family. The cofactor is NAD(+).

It is found in the cytoplasm. It carries out the reaction 4-imidazolone-5-propanoate = trans-urocanate + H2O. The protein operates within amino-acid degradation; L-histidine degradation into L-glutamate; N-formimidoyl-L-glutamate from L-histidine: step 2/3. Catalyzes the conversion of urocanate to 4-imidazolone-5-propionate. This chain is Urocanate hydratase, found in Geobacillus kaustophilus (strain HTA426).